A 321-amino-acid chain; its full sequence is Glucokinase (321 aa).

8–13 is an ATP binding site; the sequence is GDVGGT.

It belongs to the bacterial glucokinase family.

Its subcellular location is the cytoplasm. The catalysed reaction is D-glucose + ATP = D-glucose 6-phosphate + ADP + H(+). The chain is Glucokinase from Shigella flexneri serotype 5b (strain 8401).